Consider the following 373-residue polypeptide: tRNA-specific 2-thiouridylase MnmA (373 aa).

ATP-binding positions include 12 to 19 (GMSGGVDS) and M38. Residues 98 to 100 (NPD) form an interaction with target base in tRNA region. Catalysis depends on C103, which acts as the Nucleophile. An intrachain disulfide couples C103 to C200. G127 serves as a coordination point for ATP. The segment at 150–152 (KDQ) is interaction with tRNA. Catalysis depends on C200, which acts as the Cysteine persulfide intermediate. Positions 312-313 (RY) are interaction with tRNA.

The protein belongs to the MnmA/TRMU family.

Its subcellular location is the cytoplasm. It catalyses the reaction S-sulfanyl-L-cysteinyl-[protein] + uridine(34) in tRNA + AH2 + ATP = 2-thiouridine(34) in tRNA + L-cysteinyl-[protein] + A + AMP + diphosphate + H(+). Its function is as follows. Catalyzes the 2-thiolation of uridine at the wobble position (U34) of tRNA, leading to the formation of s(2)U34. The sequence is that of tRNA-specific 2-thiouridylase MnmA from Streptococcus pyogenes serotype M28 (strain MGAS6180).